Reading from the N-terminus, the 322-residue chain is UV DNA damage endonuclease (322 aa).

This sequence belongs to the uve1/UvsE family.

Functionally, component in a DNA repair pathway. Removal of UV LIGHT damaged nucleotides. Recognizes pyrimidine dimers and cleave a phosphodiester bond immediately 5' to the lesion. The polypeptide is UV DNA damage endonuclease (Nostoc sp. (strain PCC 7120 / SAG 25.82 / UTEX 2576)).